The chain runs to 285 residues: Ribosomal RNA small subunit methyltransferase H (285 aa).

S-adenosyl-L-methionine contacts are provided by residues A34 to H36, D51, F75, D96, and H103. The tract at residues P258–P285 is disordered.

It belongs to the methyltransferase superfamily. RsmH family.

The protein localises to the cytoplasm. The enzyme catalyses cytidine(1402) in 16S rRNA + S-adenosyl-L-methionine = N(4)-methylcytidine(1402) in 16S rRNA + S-adenosyl-L-homocysteine + H(+). Its function is as follows. Specifically methylates the N4 position of cytidine in position 1402 (C1402) of 16S rRNA. This is Ribosomal RNA small subunit methyltransferase H from Thermus thermophilus (strain ATCC BAA-163 / DSM 7039 / HB27).